The chain runs to 221 residues: MLEDKAVVVFSGGQDSTTCLFWAKERYRSLHAVIFDYGQRHKEEIQCAVDIANEQGVPYKVFDMGLLNQLTANALTRENISVQAGEAGESPSTFVAGRNHLFLSFAAVYAREMGAKHIITGVCETDFSGYPDCRDVFVKSLNVTLNLAMDEQFVIHTPLMWLNKKETWALADKMGQLEYIRAKTLTCYEGIRGDGCGTCPSCQLRQNGLDLYLREKAGAGQ.

ATP is bound at residue 10–20 (FSGGQDSTTCL). Zn(2+)-binding residues include cysteine 187, cysteine 196, cysteine 199, and cysteine 202.

It belongs to the QueC family. Homodimer. It depends on Zn(2+) as a cofactor.

The catalysed reaction is 7-carboxy-7-deazaguanine + NH4(+) + ATP = 7-cyano-7-deazaguanine + ADP + phosphate + H2O + H(+). The protein operates within purine metabolism; 7-cyano-7-deazaguanine biosynthesis. Its function is as follows. Catalyzes the ATP-dependent conversion of 7-carboxy-7-deazaguanine (CDG) to 7-cyano-7-deazaguanine (preQ(0)). The sequence is that of 7-cyano-7-deazaguanine synthase from Shouchella clausii (strain KSM-K16) (Alkalihalobacillus clausii).